The sequence spans 209 residues: Uridine kinase (209 aa).

12–19 serves as a coordination point for ATP; sequence GGSASGKT.

Belongs to the uridine kinase family.

The protein localises to the cytoplasm. The catalysed reaction is uridine + ATP = UMP + ADP + H(+). The enzyme catalyses cytidine + ATP = CMP + ADP + H(+). It functions in the pathway pyrimidine metabolism; CTP biosynthesis via salvage pathway; CTP from cytidine: step 1/3. The protein operates within pyrimidine metabolism; UMP biosynthesis via salvage pathway; UMP from uridine: step 1/1. The protein is Uridine kinase of Chloroflexus aurantiacus (strain ATCC 29366 / DSM 635 / J-10-fl).